The chain runs to 794 residues: Furin (794 aa).

The N-terminal stretch at 1-26 (MELRPWLLWVVAATGTLVLLAADAQG) is a signal peptide. A propeptide spans 27 to 107 (QKVFTNTWAV…QQVAKRRTKR (81 aa)) (inhibition peptide). Over 108 to 715 (DVYQEPTDPK…AGLLPSHLPE (608 aa)) the chain is Lumenal. D115 contributes to the Ca(2+) binding site. The Peptidase S8 domain occupies 121–435 (QWYLSGVTQR…YGLLDAGAMV (315 aa)). Catalysis depends on D153, which acts as the Charge relay system. A substrate-binding site is contributed by D154. Ca(2+) is bound by residues D162, D174, D179, and D181. Residues 162–183 (DLAGNYDPGASFDVNDQDPDPQ) are disordered. 191–192 (DN) serves as a coordination point for substrate. Residue H194 is the Charge relay system of the active site. Positions 205, 208, 210, and 212 each coordinate Ca(2+). 2 disulfides stabilise this stretch: C211/C360 and C303/C333. Substrate contacts are provided by residues E236, 253 to 258 (SWGPED), D264, and 292 to 295 (ASGN). D258 serves as a coordination point for Ca(2+). D301 is a Ca(2+) binding site. Substrate-binding residues include D306 and Y308. E331 lines the Ca(2+) pocket. The Charge relay system role is filled by S368. S368 is a substrate binding site. 2 N-linked (GlcNAc...) asparagine glycosylation sites follow: N387 and N440. Residues 444–576 (VAPQRKCIID…TLVLYGTAPE (133 aa)) enclose the P/Homo B domain. Residues C450 and C474 are joined by a disulfide bond. The Cell attachment site signature appears at 498–500 (RGD). N-linked (GlcNAc...) asparagine glycosylation is present at N553. 2 FU repeats span residues 577–620 (GLPV…GFAP) and 638–681 (ASVC…QSQS). The disordered stretch occupies residues 673–696 (QTCSRQSQSSRESPPQQQPPRLPP). The segment covering 676–687 (SRQSQSSRESPP) has biased composition (low complexity). A helical transmembrane segment spans residues 716 to 738 (VVAGLSCAFIVLVFVTVFLVLQL). At 739–794 (RSGFSFRGVKVYTMDRGLISYKGLPPEAWQEECPSDSEEDEGRGERTAFIKDQSAL) the chain is on the cytoplasmic side. The cell surface signal stretch occupies residues 759-762 (YKGL). The segment covering 767–780 (WQEECPSDSEEDEG) has biased composition (acidic residues). Residues 767-794 (WQEECPSDSEEDEGRGERTAFIKDQSAL) are disordered. 2 positions are modified to phosphoserine; by CK2: S773 and S775. The Trans Golgi network signal motif lies at 773–779 (SDSEEDE).

It belongs to the peptidase S8 family. Furin subfamily. As to quaternary structure, interacts with FLNA. Binds to PACS1 which mediates TGN localization and connection to clathrin adapters. Interacts with LAMP1, LAMP2 and LAMP3. The cofactor is Ca(2+). Post-translationally, the inhibition peptide, which plays the role of an intramolecular chaperone, is autocatalytically removed in the endoplasmic reticulum (ER) and remains non-covalently bound to furin as a potent autoinhibitor. Following transport to the trans Golgi, a second cleavage within the inhibition propeptide results in propeptide dissociation and furin activation. In terms of processing, phosphorylation is required for TGN localization of the endoprotease. In vivo, exists as di-, mono- and non-phosphorylated forms. In terms of tissue distribution, seems to be expressed ubiquitously.

Its subcellular location is the golgi apparatus. It localises to the trans-Golgi network membrane. The protein localises to the cell membrane. It is found in the secreted. The protein resides in the endosome membrane. It catalyses the reaction Release of mature proteins from their proproteins by cleavage of -Arg-Xaa-Yaa-Arg-|-Zaa- bonds, where Xaa can be any amino acid and Yaa is Arg or Lys. Releases albumin, complement component C3 and von Willebrand factor from their respective precursors.. Its activity is regulated as follows. Inhibited by the not secondly cleaved propeptide. Inhibited by m-guanidinomethyl-phenylacetyl-Arg-Val-Arg-(amidomethyl)-benzamidine (m-guanidinomethyl-Phac-RVR-Amb) and 4-guanidinomethyl-phenylacetyl-Arg-Tle-Arg-4-amidinobenzylamide (MI-1148). Inhibited by Decanoyl-Arg-Val-Lys-Arg-chloromethylketone (decanoyl-RVKR-CMK). Inhibited by heparin/heparan sulfate-binding. In terms of biological role, ubiquitous endoprotease within constitutive secretory pathways capable of cleavage at the RX(K/R)R consensus motif. Mediates processing of TGFB1, an essential step in TGF-beta-1 activation. Converts through proteolytic cleavage the non-functional Brain natriuretic factor prohormone into its active hormone BNP(1-32). By mediating processing of accessory subunit ATP6AP1/Ac45 of the V-ATPase, regulates the acidification of dense-core secretory granules in islets of Langerhans cells. Its function is as follows. (Microbial infection) Cleaves and activates diphtheria toxin DT. (Microbial infection) Cleaves and activates anthrax toxin protective antigen (PA). Functionally, (Microbial infection) Cleaves and activates HIV-1 virus Envelope glycoprotein gp160. In terms of biological role, (Microbial infection) Required for H7N1 and H5N1 influenza virus infection probably by cleaving hemagglutinin. Its function is as follows. (Microbial infection) Able to cleave S.pneumoniae serine-rich repeat protein PsrP. (Microbial infection) Facilitates human coronaviruses EMC and SARS-CoV-2 infections by proteolytically cleaving the spike protein at the monobasic S1/S2 cleavage site. This cleavage is essential for spike protein-mediated cell-cell fusion and entry into human lung cells. Functionally, (Microbial infection) Facilitates mumps virus infection by proteolytically cleaving the viral fusion protein F. In Homo sapiens (Human), this protein is Furin.